A 104-amino-acid polypeptide reads, in one-letter code: UPF0213 protein in VLF1-GP41 intergenic region (104 aa).

Positions 9–89 constitute a GIY-YIG domain; the sequence is KVWCVYILRQ…SKYFKLRLIK (81 aa).

This sequence belongs to the UPF0213 family.

The polypeptide is UPF0213 protein in VLF1-GP41 intergenic region (Autographa californica nuclear polyhedrosis virus (AcMNPV)).